We begin with the raw amino-acid sequence, 121 residues long: Heimdall profilin (121 aa).

Belongs to the Asgard profilin family.

The protein resides in the cytoplasm. The protein localises to the cytoskeleton. In terms of biological role, binds to actin and affects the structure of the cytoskeleton. At high concentrations inhibits spontaneous rabbit actin nucleation. This strongly suggests this archaea has a profilin-regulated actin system, and actin-type genes can be identified in this organism. The polypeptide is Heimdall profilin (Heimdallarchaeota archaeon (strain LC_2)).